Reading from the N-terminus, the 472-residue chain is Threonine synthase-like 2 (472 aa).

Lysine 113 bears the N6-(pyridoxal phosphate)lysine mark.

This sequence belongs to the threonine synthase family. Pyridoxal 5'-phosphate serves as cofactor.

Functionally, acts as a catabolic phospho-lyase on both gamma- and beta-phosphorylated substrates. Degrades O-phospho-threonine (PThr) to alpha-ketobutyrate, ammonia and phosphate. The chain is Threonine synthase-like 2 (thnsl2) from Xenopus laevis (African clawed frog).